The following is a 318-amino-acid chain: Zinc chaperone YjiA (318 aa).

11–19 (GFLGAGKTT) serves as a coordination point for GTP. Residues Glu37, Glu42, Cys66, Glu74, and His114 each coordinate Zn(2+). Residues 64–67 (CICC) carry the CXCC motif motif. Asp161 contacts GTP. Zn(2+) is bound by residues Glu167, His170, and His187. The CobW C-terminal domain maps to 224–315 (ISSIVVELDY…EEEIRAAFAG (92 aa)).

Belongs to the SIMIBI class G3E GTPase family. ZNG1 subfamily. In terms of assembly, monomer in the apo form. Metal binding induces oligomerization. Forms homodimers and higher oligomers.

The catalysed reaction is GTP + H2O = GDP + phosphate + H(+). GTPase activity is inhibited by metal binding. Activity is decreased in the presence of Co(II) or Ni(II), and is completely inhibited in the presence of Zn(II). Functionally, zinc chaperone that directly transfers zinc cofactor to target proteins, thereby activating them. Zinc is transferred from the CXCC motif in the GTPase domain to the zinc binding site in target proteins in a process requiring GTP hydrolysis. In Escherichia coli (strain K12), this protein is Zinc chaperone YjiA (yjiA).